We begin with the raw amino-acid sequence, 135 residues long: uncharacterized protein (135 aa).

Belongs to the transcriptional regulatory CopG/NikR family.

This is an uncharacterized protein from Methanocaldococcus jannaschii (strain ATCC 43067 / DSM 2661 / JAL-1 / JCM 10045 / NBRC 100440) (Methanococcus jannaschii).